The primary structure comprises 544 residues: Chaperonin GroEL 1 (544 aa).

Residues 29 to 32, lysine 50, 86 to 90, glycine 414, and aspartate 494 contribute to the ATP site; these read TLGP and DGTTT.

The protein belongs to the chaperonin (HSP60) family. As to quaternary structure, forms a cylinder of 14 subunits composed of two heptameric rings stacked back-to-back. Interacts with the co-chaperonin GroES.

It is found in the cytoplasm. The catalysed reaction is ATP + H2O + a folded polypeptide = ADP + phosphate + an unfolded polypeptide.. Its function is as follows. Together with its co-chaperonin GroES, plays an essential role in assisting protein folding. The GroEL-GroES system forms a nano-cage that allows encapsulation of the non-native substrate proteins and provides a physical environment optimized to promote and accelerate protein folding. The polypeptide is Chaperonin GroEL 1 (Psychromonas ingrahamii (strain DSM 17664 / CCUG 51855 / 37)).